Consider the following 250-residue polypeptide: 5-oxoprolinase subunit A 2 (250 aa).

This sequence belongs to the LamB/PxpA family. Forms a complex composed of PxpA, PxpB and PxpC.

The catalysed reaction is 5-oxo-L-proline + ATP + 2 H2O = L-glutamate + ADP + phosphate + H(+). Its function is as follows. Catalyzes the cleavage of 5-oxoproline to form L-glutamate coupled to the hydrolysis of ATP to ADP and inorganic phosphate. This Bordetella bronchiseptica (strain ATCC BAA-588 / NCTC 13252 / RB50) (Alcaligenes bronchisepticus) protein is 5-oxoprolinase subunit A 2.